The primary structure comprises 345 residues: D-fructose 1,6-bisphosphatase class 2/sedoheptulose 1,7-bisphosphatase (345 aa).

Residues aspartate 33, glutamate 57, aspartate 97, and glutamate 100 each contribute to the Mn(2+) site. Substrate is bound by residues 100–102, tyrosine 131, 176–178, and 198–200; these read EGT, RPR, and DGD. Glutamate 225 lines the Mn(2+) pocket.

The protein belongs to the FBPase class 2 family. In terms of assembly, homotetramer. Requires Mn(2+) as cofactor.

The catalysed reaction is beta-D-fructose 1,6-bisphosphate + H2O = beta-D-fructose 6-phosphate + phosphate. It catalyses the reaction D-sedoheptulose 1,7-bisphosphate + H2O = D-sedoheptulose 7-phosphate + phosphate. The protein operates within carbohydrate biosynthesis; Calvin cycle. Its function is as follows. Catalyzes the hydrolysis of fructose 1,6-bisphosphate (Fru 1,6-P2) and sedoheptulose 1,7-bisphosphate (Sed 1,7-P2) to fructose 6-phosphate and sedoheptulose 7-phosphate, respectively. This is D-fructose 1,6-bisphosphatase class 2/sedoheptulose 1,7-bisphosphatase from Synechocystis sp. (strain ATCC 27184 / PCC 6803 / Kazusa).